The following is a 195-amino-acid chain: MARCKS-related protein (195 aa).

Residues 1–195 form a disordered region; the sequence is MGSQSSKAPR…PTPASAEQNE (195 aa). Residue glycine 2 is the site of N-myristoyl glycine attachment. Threonine 14 carries the post-translational modification Phosphothreonine. A compositionally biased stretch (low complexity) spans 16-26; it reads EEAAGASPAKA. Phosphoserine occurs at positions 22, 36, 41, and 48. The segment covering 53–64 has biased composition (low complexity); sequence GTDEAAGATGDA. Serine 71 is subject to Phosphoserine. Residues 76–85 show a composition bias toward basic and acidic residues; the sequence is AKGEVPPKET. Threonine 85 bears the Phosphothreonine mark. A compositionally biased stretch (basic residues) spans 86–98; that stretch reads PKKKKKFSFKKPF. Positions 87–110 are effector domain involved in lipid-binding and calmodulin-binding; that stretch reads KKKKKFSFKKPFKLSGLSFKRNRK. 6 positions are modified to phosphoserine: serine 93, serine 101, serine 104, serine 119, serine 120, and serine 135. Threonine 148 is subject to Phosphothreonine. Phosphoserine occurs at positions 151, 162, and 165. The segment covering 153–195 has biased composition (low complexity); that stretch reads EPQAKGAEASAASEEEAGPQATEPSTPSGPESGPTPASAEQNE. Phosphothreonine occurs at positions 178 and 187.

Belongs to the MARCKS family. Binds to filamentous actin (F-actin), but not to monomeric G-actin, independently of its phosphorylation status. Phosphorylated. Phosphorylation at Ser-120 and Thr-178 is non-redundantly catalyzed by MAPK8 in vivo. Phosphorylation at Thr-148 is preferentially catalyzed by MAPK8 in vivo, but this modification can also be catalyzed by other kinases in the absence of MAPK8. May be phosphorylated by protein kinase C, which disrupts the interaction with calmodulin.

It is found in the cytoplasm. It localises to the cytoskeleton. The protein localises to the cell membrane. In terms of biological role, controls cell movement by regulating actin cytoskeleton homeostasis and filopodium and lamellipodium formation. When unphosphorylated, induces cell migration. When phosphorylated by MAPK8, induces actin bundles formation and stabilization, thereby reducing actin plasticity, hence restricting cell movement, including neuronal migration. May be involved in coupling the protein kinase C and calmodulin signal transduction systems. The chain is MARCKS-related protein (MARCKSL1) from Homo sapiens (Human).